The sequence spans 669 residues: UvrABC system protein C (669 aa).

Residues 16–95 (TNPGVYRFRD…IKEFKPRFNV (80 aa)) enclose the GIY-YIG domain. The UVR domain occupies 207–242 (KRFIGRLEKDMAAAVAELDYERAARVRDDIIALRKV).

The protein belongs to the UvrC family. In terms of assembly, interacts with UvrB in an incision complex.

It localises to the cytoplasm. The UvrABC repair system catalyzes the recognition and processing of DNA lesions. UvrC both incises the 5' and 3' sides of the lesion. The N-terminal half is responsible for the 3' incision and the C-terminal half is responsible for the 5' incision. The polypeptide is UvrABC system protein C (Arthrobacter sp. (strain FB24)).